Consider the following 302-residue polypeptide: Sulfate adenylyltransferase subunit 2 (302 aa).

Belongs to the PAPS reductase family. CysD subfamily. In terms of assembly, heterodimer composed of CysD, the smaller subunit, and CysN.

It carries out the reaction sulfate + ATP + H(+) = adenosine 5'-phosphosulfate + diphosphate. The protein operates within sulfur metabolism; hydrogen sulfide biosynthesis; sulfite from sulfate: step 1/3. With CysN forms the ATP sulfurylase (ATPS) that catalyzes the adenylation of sulfate producing adenosine 5'-phosphosulfate (APS) and diphosphate, the first enzymatic step in sulfur assimilation pathway. APS synthesis involves the formation of a high-energy phosphoric-sulfuric acid anhydride bond driven by GTP hydrolysis by CysN coupled to ATP hydrolysis by CysD. This Parabacteroides distasonis (strain ATCC 8503 / DSM 20701 / CIP 104284 / JCM 5825 / NCTC 11152) protein is Sulfate adenylyltransferase subunit 2.